The chain runs to 583 residues: Isocitrate dehydrogenase kinase/phosphatase (583 aa).

ATP contacts are provided by residues 315-321 (APGIRGM) and K336. Residue D371 is part of the active site.

It belongs to the AceK family.

Its subcellular location is the cytoplasm. It catalyses the reaction L-seryl-[isocitrate dehydrogenase] + ATP = O-phospho-L-seryl-[isocitrate dehydrogenase] + ADP + H(+). In terms of biological role, bifunctional enzyme which can phosphorylate or dephosphorylate isocitrate dehydrogenase (IDH) on a specific serine residue. This is a regulatory mechanism which enables bacteria to bypass the Krebs cycle via the glyoxylate shunt in response to the source of carbon. When bacteria are grown on glucose, IDH is fully active and unphosphorylated, but when grown on acetate or ethanol, the activity of IDH declines drastically concomitant with its phosphorylation. This is Isocitrate dehydrogenase kinase/phosphatase from Salmonella heidelberg (strain SL476).